A 357-amino-acid polypeptide reads, in one-letter code: Probable butyrate kinase (357 aa).

The protein belongs to the acetokinase family.

The protein localises to the cytoplasm. The catalysed reaction is butanoate + ATP = butanoyl phosphate + ADP. This chain is Probable butyrate kinase, found in Thermotoga petrophila (strain ATCC BAA-488 / DSM 13995 / JCM 10881 / RKU-1).